A 219-amino-acid polypeptide reads, in one-letter code: Vesicle-associated membrane protein 721 (219 aa).

At 1–196 (MAQQSLIYSF…MWLQNMKIKL (196 aa)) the chain is on the cytoplasmic side. The Longin domain occupies 10-114 (FVARGTVILV…SLNKEFGSKL (105 aa)). The region spanning 130 to 190 (KLAKVKAQVS…TQMRRKMWLQ (61 aa)) is the v-SNARE coiled-coil homology domain. Residues 197 to 217 (IVLAIIIALILIIVLSVCHGF) form a helical; Anchor for type IV membrane protein membrane-spanning segment. Residues 218–219 (KC) are Vesicular-facing.

This sequence belongs to the synaptobrevin family. As to expression, expressed in flowers, leaves, stems and roots.

Its subcellular location is the cell membrane. It is found in the early endosome membrane. Functionally, involved in the targeting and/or fusion of transport vesicles to their target membrane. The sequence is that of Vesicle-associated membrane protein 721 from Arabidopsis thaliana (Mouse-ear cress).